The primary structure comprises 443 residues: CBL-interacting protein kinase 2 (443 aa).

The Protein kinase domain maps to 13–267; sequence YEMGKLLGQG…MDKIMENPWF (255 aa). ATP contacts are provided by residues 19 to 27 and lysine 42; that span reads LGQGTFAKV. The Proton acceptor role is filled by aspartate 135. The segment at 153–182 is activation loop; the sequence is DFGLSALADCKRQDGLLHTTCGTPAYVAPE. In terms of domain architecture, NAF spans 302 to 329; sequence TLEKKPSNLNAFDIISLSTGLDLSGMFE. The PPI stretch occupies residues 333-362; sequence KKESKFTSTSTASTIISKIEDIAKGLRLKL.

It belongs to the protein kinase superfamily. CAMK Ser/Thr protein kinase family. SNF1 subfamily. The cofactor is Mn(2+).

The catalysed reaction is L-seryl-[protein] + ATP = O-phospho-L-seryl-[protein] + ADP + H(+). The enzyme catalyses L-threonyl-[protein] + ATP = O-phospho-L-threonyl-[protein] + ADP + H(+). Functionally, CIPK serine-threonine protein kinases interact with CBL proteins. Binding of a CBL protein to the regulatory NAF domain of CIPK protein lead to the activation of the kinase in a calcium-dependent manner. This chain is CBL-interacting protein kinase 2 (CIPK2), found in Oryza sativa subsp. japonica (Rice).